The following is a 162-amino-acid chain: 2-C-methyl-D-erythritol 2,4-cyclodiphosphate synthase (162 aa).

The a divalent metal cation site is built by aspartate 9 and histidine 11. 4-CDP-2-C-methyl-D-erythritol 2-phosphate is bound by residues 9–11 and 37–38; these read DFH and HS. Residue histidine 45 participates in a divalent metal cation binding. 4-CDP-2-C-methyl-D-erythritol 2-phosphate-binding positions include 59-61, 64-68, 135-138, and arginine 145; these read DIG, FPDTD, and TTSE.

Belongs to the IspF family. As to quaternary structure, homotrimer. Requires a divalent metal cation as cofactor.

It catalyses the reaction 4-CDP-2-C-methyl-D-erythritol 2-phosphate = 2-C-methyl-D-erythritol 2,4-cyclic diphosphate + CMP. The protein operates within isoprenoid biosynthesis; isopentenyl diphosphate biosynthesis via DXP pathway; isopentenyl diphosphate from 1-deoxy-D-xylulose 5-phosphate: step 4/6. Functionally, involved in the biosynthesis of isopentenyl diphosphate (IPP) and dimethylallyl diphosphate (DMAPP), two major building blocks of isoprenoid compounds. Catalyzes the conversion of 4-diphosphocytidyl-2-C-methyl-D-erythritol 2-phosphate (CDP-ME2P) to 2-C-methyl-D-erythritol 2,4-cyclodiphosphate (ME-CPP) with a corresponding release of cytidine 5-monophosphate (CMP). The polypeptide is 2-C-methyl-D-erythritol 2,4-cyclodiphosphate synthase (Leptospira biflexa serovar Patoc (strain Patoc 1 / Ames)).